The following is an 868-amino-acid chain: Coatomer subunit gamma (868 aa).

Positions 1–11 (MWRTKRGRTRR) are enriched in basic residues. Residues 1 to 22 (MWRTKRGRTRRRDAGGNPWQNL) form a disordered region. HEAT repeat units lie at residues 64 to 101 (REAT…IADD), 287 to 324 (RELS…LHPP), 326 to 359 (VNVC…GAES), and 360 to 396 (SVER…KFPR).

It belongs to the COPG family. In terms of assembly, oligomeric complex that consists of at least the alpha, beta, beta', gamma, delta, epsilon and zeta subunits.

It is found in the cytoplasm. The protein resides in the golgi apparatus membrane. It localises to the cytoplasmic vesicle. The protein localises to the COPI-coated vesicle membrane. Its subcellular location is the endoplasmic reticulum. In terms of biological role, the coatomer is a cytosolic protein complex that binds to dilysine motifs and reversibly associates with Golgi non-clathrin-coated vesicles, which further mediate biosynthetic protein transport from the ER, via the Golgi up to the trans Golgi network. Coatomer complex is required for budding from Golgi membranes, and is essential for the retrograde Golgi-to-ER transport of dilysine-tagged proteins. This is Coatomer subunit gamma from Anopheles gambiae (African malaria mosquito).